The chain runs to 283 residues: tRNA-cytidine(32) 2-sulfurtransferase (283 aa).

Residues 49–54 (SGGKDS) carry the PP-loop motif motif. Residues Cys-124, Cys-127, and Cys-215 each contribute to the [4Fe-4S] cluster site.

It belongs to the TtcA family. As to quaternary structure, homodimer. The cofactor is Mg(2+). [4Fe-4S] cluster is required as a cofactor.

The protein localises to the cytoplasm. It carries out the reaction cytidine(32) in tRNA + S-sulfanyl-L-cysteinyl-[cysteine desulfurase] + AH2 + ATP = 2-thiocytidine(32) in tRNA + L-cysteinyl-[cysteine desulfurase] + A + AMP + diphosphate + H(+). Its pathway is tRNA modification. In terms of biological role, catalyzes the ATP-dependent 2-thiolation of cytidine in position 32 of tRNA, to form 2-thiocytidine (s(2)C32). The sulfur atoms are provided by the cysteine/cysteine desulfurase (IscS) system. This chain is tRNA-cytidine(32) 2-sulfurtransferase, found in Acaryochloris marina (strain MBIC 11017).